We begin with the raw amino-acid sequence, 527 residues long: MQYSIKQVLSKASDKLNKIGISSSQLEARILLRYVINKPIEYLLINLDEQLNEVEIEAFEKLLERRLKHEPIAYIIGIKEFYSREFIVNKHVLIPRADTEVLVDVCVHKSSLRATKRSVAISGILSKIASSTPMASSRNDEYTKILELGTGSGCIAISLLCELPNARVVATDISLDAIEVARNNALKYHVTDRIQIIHSNWFENLGKQKFDVIVSNPPYISTDEKPEMALETLNHEPYIALFAEEDGLQAYRIIAENAKKFLKPNGKIVLEIGFKQEEAVTQIFLSNGYNIESVYKDLQGHSRVILFSPINLNRSYARRIGKSLSGLQQNLLDNELPKYLFSKEKLIDEKRKIFLEIGFGMGEHFINQAKMNPDALFIGVEVYLNGVANVLKLASEQNITNFLLFPNNLDFILNDLPNNSLDGIYILFPDPWIKNKQKKKRIFNKERLKILQDKLKDNGNLVFASDIENYFYEAIELIEQNSNFKIMNKNNYLKPHDNYVITKYHQKAIKANRIPRFIILQHVSGDH.

The segment at 1 to 309 (MQYSIKQVLS…GHSRVILFSP (309 aa)) is hemK. Residues 1–311 (MQYSIKQVLS…SRVILFSPIN (311 aa)) are RF MTase. Residues 149–153 (GTGSG), Asp-172, Trp-201, Asn-216, Glu-356, Glu-381, Asn-408, and Asp-430 each bind S-adenosyl-L-methionine. Substrate is bound at residue 216 to 219 (NPPY). The tract at residues 310-527 (INLNRSYARR…IILQHVSGDH (218 aa)) is tRNA (guanine-N(7)-)-methyltransferase. The segment at 314–527 (RSYARRIGKS…IILQHVSGDH (214 aa)) is tRNA MTase. Residue Asp-430 is part of the active site. Residues Lys-434 and Asp-466 each coordinate substrate.

In the C-terminal section; belongs to the class I-like SAM-binding methyltransferase superfamily. TrmB family. This sequence in the N-terminal section; belongs to the protein N5-glutamine methyltransferase family. PrmC subfamily.

It carries out the reaction L-glutaminyl-[peptide chain release factor] + S-adenosyl-L-methionine = N(5)-methyl-L-glutaminyl-[peptide chain release factor] + S-adenosyl-L-homocysteine + H(+). The enzyme catalyses guanosine(46) in tRNA + S-adenosyl-L-methionine = N(7)-methylguanosine(46) in tRNA + S-adenosyl-L-homocysteine. In terms of biological role, methylates the class 1 translation termination release factors RF1/PrfA and RF2/PrfB on the glutamine residue of the universally conserved GGQ motif. Functionally, catalyzes the formation of N(7)-methylguanine at position 46 (m7G46) in tRNA. The chain is Bifunctional methyltransferase (prmC/trmB) from Rickettsia felis (strain ATCC VR-1525 / URRWXCal2) (Rickettsia azadi).